The primary structure comprises 128 residues: Small ribosomal subunit protein uS12 (128 aa).

The interval 1–30 is disordered; sequence MPTINQLIRKGREPKERKSKSPALMGNPQK. Residue Asp-89 is modified to 3-methylthioaspartic acid. The disordered stretch occupies residues 106–128; it reads GVEGRKQGRSKYGTKRPKEGGKK.

It belongs to the universal ribosomal protein uS12 family. Part of the 30S ribosomal subunit. Contacts proteins S8 and S17. May interact with IF1 in the 30S initiation complex.

Functionally, with S4 and S5 plays an important role in translational accuracy. In terms of biological role, interacts with and stabilizes bases of the 16S rRNA that are involved in tRNA selection in the A site and with the mRNA backbone. Located at the interface of the 30S and 50S subunits, it traverses the body of the 30S subunit contacting proteins on the other side and probably holding the rRNA structure together. The combined cluster of proteins S8, S12 and S17 appears to hold together the shoulder and platform of the 30S subunit. The sequence is that of Small ribosomal subunit protein uS12 from Dictyoglomus thermophilum (strain ATCC 35947 / DSM 3960 / H-6-12).